The chain runs to 624 residues: Na(+)/H(+) antiporter NhaA (624 aa).

Residues 1–164 (MNPELPPNHL…TFFINGRRYD (164 aa)) form a unknown region. Positions 165 to 624 (GPWDVRSLSE…NAQAEEEKNP (460 aa)) are na(+)/H(+) antiporter NhaA. Transmembrane regions (helical) follow at residues 199 to 219 (GIML…ALGP), 240 to 260 (LSLR…VVGL), 279 to 299 (LPIA…LILV), 319 to 339 (GWGV…AMMG), 348 to 368 (VFLT…VAIF), 371 to 391 (GELH…LALL), 407 to 427 (IVLW…GIIL), 497 to 517 (FLVL…TSVF), 521 to 541 (IPLM…GFIT), 565 to 585 (GAGA…SQAF), and 596 to 616 (IAIF…LWNA).

This sequence belongs to the NhaA Na(+)/H(+) (TC 2.A.33) antiporter family.

It localises to the cell inner membrane. The catalysed reaction is Na(+)(in) + 2 H(+)(out) = Na(+)(out) + 2 H(+)(in). Functionally, na(+)/H(+) antiporter that extrudes sodium in exchange for external protons. This is Na(+)/H(+) antiporter NhaA from Nitrosospira multiformis (strain ATCC 25196 / NCIMB 11849 / C 71).